We begin with the raw amino-acid sequence, 83 residues long: Exodeoxyribonuclease 7 small subunit (83 aa).

Belongs to the XseB family. Heterooligomer composed of large and small subunits.

The protein localises to the cytoplasm. It carries out the reaction Exonucleolytic cleavage in either 5'- to 3'- or 3'- to 5'-direction to yield nucleoside 5'-phosphates.. Its function is as follows. Bidirectionally degrades single-stranded DNA into large acid-insoluble oligonucleotides, which are then degraded further into small acid-soluble oligonucleotides. In Mesorhizobium japonicum (strain LMG 29417 / CECT 9101 / MAFF 303099) (Mesorhizobium loti (strain MAFF 303099)), this protein is Exodeoxyribonuclease 7 small subunit.